Here is a 155-residue protein sequence, read N- to C-terminus: Cardio acceleratory peptide 2b (155 aa).

The first 26 residues, 1–26 (MKAIFSLYNIVSAILLLVLLAEFSTA), serve as a signal peptide directing secretion. A propeptide spanning residues 27–33 (ELNHDKN) is cleaved from the precursor. Val47 bears the Valine amide mark. The propeptide occupies 50–85 (SDPSLANSLRDASDAAVFDGLYGDASQEDYNEADYQ). Position 96 is a valine amide (Val96). A propeptide spanning residues 99–117 (SDAELRKFAHLLALQQVLD) is cleaved from the precursor. Leu134 carries the leucine amide modification. Positions 138-155 (SVDAKAFSDASKGQQEFN) are excised as a propeptide.

It belongs to the pyrokinin family.

It localises to the secreted. Its function is as follows. CAP-1 and CAP-2, but not CAP-3 are ligands for the Capa receptor. CAP-1 and CAP-2 are probably components of the signal transduction pathway that leads to Malpighian tubule fluid secretion via the second messenger nitric oxide. In Drosophila pseudoobscura pseudoobscura (Fruit fly), this protein is Cardio acceleratory peptide 2b.